Consider the following 125-residue polypeptide: Snaclec coagulation factor IX/factor X-binding protein subunit B (125 aa).

The C-type lectin domain maps to 1–122 (DCSSGWTAYG…SLFGHFVCKS (122 aa)). Disulfide bonds link Cys-2-Cys-13, Cys-30-Cys-120, and Cys-97-Cys-112. Ca(2+) contacts are provided by Ser-41 and Glu-47.

It belongs to the snaclec family. In terms of assembly, heterodimer of subunits A and B; disulfide-linked. In terms of tissue distribution, expressed by the venom gland.

It localises to the secreted. In terms of biological role, anticoagulant protein which binds to coagulation factor IX (F9) and coagulation factor X (F10) in the presence of calcium. It may bind the gamma-carboxyglutamic acid-domain regions of factors with a 1 to 1 stoichiometry. The dissociation constant (K(d)) are 6.6 nM for factor IX (F9) and 125 nM for factor X (F10). Does not bind carbohydrates. This is Snaclec coagulation factor IX/factor X-binding protein subunit B from Echis carinatus (Saw-scaled viper).